The chain runs to 521 residues: MGLGKKLSVAVAASFMSLSISLPGVQAAEGHQLKENQTNFLSKNAIAQSELSAPNDKAVKQFLKKNSNIFKGDPSKRLKLVESTTDALGYKHFRYAPVVNGVPIKDSQVIVHVDKSDNVYAVNGELHNQSAAKTDNSQKVSSEKALALAFKAIGKSPDAVSNGAAKNSNKAELKAIETKDGSYRLAYDVTIRYVEPEPANWEVLVDAETGSILKQQNKVEHAAATGSGTTLKGATVPLNISYEGGKYVLRDLSKPTGTQIITYDLQNRQSRLPGTLVSSTTKTFTSSSQRAAVDAHYNLGKVYDYFYSNFKRNSYDNKGSKIVSSVHYGTQYNNAAWTGDQMIYGDGDGSFFSPLSGSLDVTAHEMTHGVTQETANLIYENQPGALNESFSDVFGYFNDTEDWDIGEDITVSQPALRSLSNPTKYNQPDNYANYRNLPNTDEGDYGGVHTNSGIPNKAAYNTITKLGVSKSQQIYYRALTTYLTPSSTFKDAKAALIQSARDLYGSTDAAKVEAAWNAVGL.

The signal sequence occupies residues 1 to 27; the sequence is MGLGKKLSVAVAASFMSLSISLPGVQA. A propeptide spans 28–221 (activation peptide); it reads AEGHQLKENQ…ILKQQNKVEH (194 aa). Position 360 (Asp360) interacts with Ca(2+). Residue His364 participates in Zn(2+) binding. Glu365 is a catalytic residue. Zn(2+) is bound by residues His368 and Glu388. 4 residues coordinate Ca(2+): Asp399, Asp402, Asp404, and Glu407. His449 functions as the Proton donor in the catalytic mechanism.

Belongs to the peptidase M4 family. Ca(2+) is required as a cofactor. The cofactor is Zn(2+).

It is found in the secreted. It carries out the reaction Similar, but not identical, to that of thermolysin.. In terms of biological role, extracellular zinc metalloprotease. The chain is Bacillolysin (nprE) from Bacillus subtilis subsp. amylosacchariticus.